The following is a 266-amino-acid chain: Vitamin B12-binding protein (266 aa).

The N-terminal stretch at 1–22 is a signal peptide; the sequence is MAKSLFRALVALSFLAPLWLNA. Residues 25–266 enclose the Fe/B12 periplasmic-binding domain; sequence RVITLSPANT…QLCNALSQVD (242 aa). Cyanocob(III)alamin is bound by residues Y50 and 242–246; that span reads DWFER. Residues C183 and C259 are joined by a disulfide bond.

The protein belongs to the BtuF family. In terms of assembly, the complex is composed of two ATP-binding proteins (BtuD), two transmembrane proteins (BtuC) and a solute-binding protein (BtuF).

It is found in the periplasm. In terms of biological role, part of the ABC transporter complex BtuCDF involved in vitamin B12 import. Binds vitamin B12 and delivers it to the periplasmic surface of BtuC. The chain is Vitamin B12-binding protein from Escherichia coli O6:H1 (strain CFT073 / ATCC 700928 / UPEC).